The sequence spans 228 residues: 6-carboxyhexanoate--CoA ligase (228 aa).

It belongs to the BioW family. As to quaternary structure, homodimer. Mg(2+) is required as a cofactor.

The enzyme catalyses heptanedioate + ATP + CoA = 6-carboxyhexanoyl-CoA + AMP + diphosphate. It participates in metabolic intermediate metabolism; pimeloyl-CoA biosynthesis; pimeloyl-CoA from pimelate: step 1/1. Functionally, catalyzes the transformation of pimelate into pimeloyl-CoA with concomitant hydrolysis of ATP to AMP. This chain is 6-carboxyhexanoate--CoA ligase, found in Staphylococcus epidermidis (strain ATCC 12228 / FDA PCI 1200).